A 436-amino-acid polypeptide reads, in one-letter code: Probable cinnamyl alcohol dehydrogenase 8B (436 aa).

A Zn(2+)-binding site is contributed by Cys120. Thr122 lines the NADP(+) pocket. Positions 142, 143, 173, 176, 179, 187, and 236 each coordinate Zn(2+). Residues Thr240, 261–266 (GLGGLG), 284–289 (STSPGK), Thr324, Gly348, and 371–373 (NCV) contribute to the NADP(+) site.

This sequence belongs to the zinc-containing alcohol dehydrogenase family. Homodimer. It depends on Zn(2+) as a cofactor.

It catalyses the reaction (E)-cinnamyl alcohol + NADP(+) = (E)-cinnamaldehyde + NADPH + H(+). It carries out the reaction (E)-coniferol + NADP(+) = (E)-coniferaldehyde + NADPH + H(+). The catalysed reaction is (E)-sinapyl alcohol + NADP(+) = (E)-sinapaldehyde + NADPH + H(+). The enzyme catalyses (E)-4-coumaroyl alcohol + NADP(+) = (E)-4-coumaraldehyde + NADPH + H(+). It catalyses the reaction (E)-caffeyl alcohol + NADP(+) = (E)-caffeyl aldehyde + NADPH + H(+). It functions in the pathway aromatic compound metabolism; phenylpropanoid biosynthesis. Involved in lignin biosynthesis. Catalyzes the final step specific for the production of lignin monomers. Catalyzes the NADPH-dependent reduction of coniferaldehyde, 5-hydroxyconiferaldehyde, sinapaldehyde, 4-coumaraldehyde and caffeyl aldehyde to their respective alcohols. In Oryza sativa subsp. japonica (Rice), this protein is Probable cinnamyl alcohol dehydrogenase 8B.